Consider the following 522-residue polypeptide: Maturase K (522 aa).

This sequence belongs to the intron maturase 2 family. MatK subfamily.

The protein resides in the plastid. It is found in the chloroplast. Usually encoded in the trnK tRNA gene intron. Probably assists in splicing its own and other chloroplast group II introns. The chain is Maturase K from Iris orientalis (Yellowband iris).